The primary structure comprises 485 residues: Sperm-associated antigen 8 (485 aa).

Disordered regions lie at residues 1 to 42, 75 to 98, and 127 to 215; these read METN…SPRS, KTPAPCSEFMEPSSDPSLLGEPCA, and TTTD…CIPP. A compositionally biased stretch (low complexity) spans 132 to 150; that stretch reads SSNPGPVPGSSSGPVLGSS. Residues 151–191 show a composition bias toward gly residues; it reads SGAGHGSGSGSGPGCGSVPGSGSGPGPGSGPGSGPGHGSGS. Mn stretches follow at residues 327–340 and 379–393; these read SSTTQKDSYQPPGN and ESVTHHDYRMELAQA.

Belongs to the SPAG8 family. Microtubule inner protein component of sperm flagellar doublet microtubules. Interacts with FHL5 (via second LIM domain). Interacts with RANBP9. In terms of tissue distribution, expressed in testis (germ cells), but not in liver, kidney, prostate and small intestine. Expressed in airway epithelial cells.

The protein resides in the cytoplasm. Its subcellular location is the nucleus. It is found in the cytoplasmic vesicle. The protein localises to the secretory vesicle. It localises to the acrosome. The protein resides in the cytoskeleton. Its subcellular location is the microtubule organizing center. It is found in the spindle. The protein localises to the cilium axoneme. It localises to the flagellum axoneme. In terms of biological role, microtubule inner protein (MIP) part of the dynein-decorated doublet microtubules (DMTs) in cilia axoneme, which is required for motile cilia beating. Plays a role in spermatogenesis by enhancing the binding of CREM isoform tau to its coactivator FHL5 and increasing the FHL5-regulated transcriptional activation of CREM isoform tau. Involved in the acrosome reaction and in binding of sperm to the zona pellucida. Plays a role in regulation of the cell cycle by controlling progression through the G2/M phase, possibly by delaying the activation of CDK1 which is required for entry into mitosis. May play a role in fertility and microtubule formation through interaction with RANBP9. The protein is Sperm-associated antigen 8 of Homo sapiens (Human).